A 504-amino-acid polypeptide reads, in one-letter code: Probable protein phosphatase 2C 18 (504 aa).

The segment at methionine 1 to isoleucine 49 is disordered. Residues glutamate 17–glutamate 26 are compositionally biased toward low complexity. Residues isoleucine 67–leucine 399 enclose the PPM-type phosphatase domain. Mn(2+) is bound by residues aspartate 103, glycine 104, aspartate 344, and aspartate 390. Residues threonine 410–glutamate 435 are disordered. The span at valine 412 to serine 421 shows a compositional bias: basic and acidic residues.

It belongs to the PP2C family. Mg(2+) serves as cofactor. The cofactor is Mn(2+).

The catalysed reaction is O-phospho-L-seryl-[protein] + H2O = L-seryl-[protein] + phosphate. The enzyme catalyses O-phospho-L-threonyl-[protein] + H2O = L-threonyl-[protein] + phosphate. This Arabidopsis thaliana (Mouse-ear cress) protein is Probable protein phosphatase 2C 18.